A 285-amino-acid polypeptide reads, in one-letter code: UPF0354 protein SACOL1793 (285 aa).

It belongs to the UPF0354 family.

The sequence is that of UPF0354 protein SACOL1793 from Staphylococcus aureus (strain COL).